The sequence spans 75 residues: Metallothionein-like protein 1B (75 aa).

This sequence belongs to the metallothionein superfamily. Type 15 family.

Metallothioneins have a high content of cysteine residues that bind various heavy metals. The protein is Metallothionein-like protein 1B (MT1B) of Vicia faba (Broad bean).